The sequence spans 355 residues: Cyanide hydratase (355 aa).

A CN hydrolase domain is found at 6–285; it reads YKAAAVTSEP…DGLLFVDIDL (280 aa). The active-site Proton acceptor is E46. The active site involves K128. C163 acts as the Nucleophile in catalysis.

The protein belongs to the carbon-nitrogen hydrolase superfamily. Nitrilase family. As to quaternary structure, oligomer of dimers, forming left-handed helical fibers.

The catalysed reaction is formamide = hydrogen cyanide + H2O. Catalyzes the hydration of cyanide to formamide. Degradation of cyanide may be important for plant pathogenic fungi in infection of cyanogenic plants. The protein is Cyanide hydratase of Gibberella zeae (strain ATCC MYA-4620 / CBS 123657 / FGSC 9075 / NRRL 31084 / PH-1) (Wheat head blight fungus).